The primary structure comprises 2144 residues: MTSLAQQLQRLALPQSDASLLSRDEVASLLFDPKEAATIDRDTAFAIGCTGLEELLGIDPSFEQFEAPLFSQLAKTLERSVQTKAVNKQLDENISLFLIHLSPYFLLKPAQKCLEWLIHRFHIHLYNQDSLIACVLPYHETRIFVRVIQLLKINNSKHRWFWLLPVKQSGVPLAKGTLITHCYKDLGFMDFICSLVTKSVKVFAEYPGSSAQLRVLLAFYASTIVSALVAAEDVSDNIIAKLFPYIQKGLKSSLPDYRAATYMIICQISVKVTMENTFVNSLASQIIKTLTKIPSLIKDGLSCLIVLLQRQKPESLGKKPFPHLCNVPDLITILHGISETYDVSPLLHYMLPHLVVSIIHHVTGEETEGMDGQIYKRHLEAILTKISLKNNLDHLLASLLFEEYISYSSQEEMDSNKVSLLNEQFLPLIRLLESKYPRTLDVVLEEHLKEIADLKKQELFHQFVSLSTSGGKYQFLADSDTSLMLSLNHPLAPVRILAMNHLKKIMKTSKEGVDESFIKEAVLARLGDDNIDVVLSAISAFEIFKEHFSSEVTISNLLNLFQRAELSKNGEWYEVLKIAADILIKEEILSENDQLSNQVVVCLLPFMVINNDDTESAEMKIAIYLSKSGICSLHPLLRGWEEALENVIKSTKPGKLIGVANQKMIELLADNINLGDPSSMLKMVEDLISVGEEESFNLKQKVTFHVILSVLVSCCSSLKETHFPFAIRVFSLLQKKIKKLESVITAVEIPSEWHIELMLDRGIPVELWAHYVEELNSTQRVAVEDSVFLVFSLKKFIYALKAPKSFPKGDIWWNPEQLKEDSRDYLHLLIGLFEMMLNGADAVHFRVLMKLFIKVHLEDVFQLFKFCSVLWTYGSSLSNPLNCSVKTVLQTQALYVGCAMLSSQKTQCKHQLASISSPVVTSLLINLGSPVKEVRRAAIQCLQALSGVASPFYLIIDHLISKAEEITSDAAYVIQDLATLFEELQREKKLKSHQKLSETLKNLLSCVYSCPSYIAKDLMKVLQGVNGEMVLSQLLPMAEQLLEKIQKEPTAVLKDEAMVLHLTLGKYNEFSVSLLNEDPKSLDIFIKAVHTTKELYAGMPTIQITALEKITKPFFAAISDEKVQQKLLRMLFDLLVNCKNSHCAQTVSSVFKGISVNAEQVRIELEPPDKAKPLGTVQQKRRQKMQQKKSQDLESVQEVGGSYWQRVTLILELLQHKKKLRSPQILVPTLFNLLSRCLEPLPQEQGNMEYTKQLILSCLLNICQKLSPDGGKIPKDILDEEKFNVELIVQCIRLSEMPQTHHHALLLLGTVAGIFPDKVLHNIMSIFTFMGANVMRLDDTYSFQVINKTVKMVIPALIQSDSGDSIEVSRNVEEIVVKIISVFVDALPHVPEHRRLPILVQLVDTLGAEKFLWILLILLFEQYVTKTVLAAAYGEKDAILEADTEFWFSVCCEFSVQHQIQSLMNILQYLLKLPEEKEETIPKAVSFNKSESQEEMLQVFNVETHTSKQLRHFKFLSVSFMSQLLSSNNFLKKVVESGGPEILKGLEERLLETVLGYISAVAQSMERNADKLTVKFWRALLSKAYDLLDKVNALLPTETFIPVIRGLVGNPLPSVRRKALDLLNNKLQQNISWKKTIVTRFLKLVPDLLAIVQRKKKEGEEEQAINRQTALYTLKLLCKNFGAENPDPFVPVLNTAVKLIAPERKEEKNVLGSALLCIAEVTSTLEALAIPQLPSLMPSLLTTMKNTSELVSSEVYLLSALAALQKVVETLPHFISPYLEGILSQVIHLEKITSEMGSASQANIRLTSLKKTLATTLAPRVLLPAIKKTYKQIEKNWKNHMGPFMSILQEHIGVMKKEELTSHQSQLTAFFLEALDFRAQHSENDLEEVGKTENCIIDCLVAMVVKLSEVTFRPLFFKLFDWAKTEDAPKDRLLTFYNLADCIAEKLKGLFTLFAGHLVKPFADTLNQVNISKTDEAFFDSENDPEKCCLLLQFILNCLYKIFLFDTQHFISKERAEALMMPLVDQLENRLGGEEKFQERVTKHLIPCIAQFSVAMADDSLWKPLNYQILLKTRDSSPKVRFAALITVLALAEKLKENYIVLLPESIPFLAELMEDECEEVEHQCQKTIQQLETVLGEPLQSYF.

Met-1 is subject to N-acetylmethionine. N-acetylthreonine; in HEAT repeat-containing protein 1, N-terminally processed is present on Thr-2. Ser-516 carries the phosphoserine modification. The stretch at 913–951 (ASISSPVVTSLLINLGSPVKEVRRAAIQCLQALSGVASP) is one HEAT 1 repeat. A disordered region spans residues 1170 to 1191 (KAKPLGTVQQKRRQKMQQKKSQ). Ser-1190 is subject to Phosphoserine. The HEAT 2 repeat unit spans residues 1347–1385 (NKTVKMVIPALIQSDSGDSIEVSRNVEEIVVKIISVFVD). Ser-1492 carries the post-translational modification Phosphoserine. HEAT repeat units follow at residues 1594 to 1632 (LLPT…QNIS), 1730 to 1770 (IPQL…VVET), and 2100 to 2138 (IVLL…VLGE).

The protein belongs to the HEATR1/UTP10 family. Part of the small subunit (SSU) processome, composed of more than 70 proteins and the RNA chaperone small nucleolar RNA (snoRNA) U3. Interacts with MYC; the interaction is required for localization of MYC to the nucleolus.

It localises to the nucleus. The protein localises to the nucleolus. Functionally, ribosome biogenesis factor; required for recruitment of Myc to nucleoli. Involved in nucleolar processing of pre-18S ribosomal RNA. Required for optimal pre-ribosomal RNA transcription by RNA polymerase I. Part of the small subunit (SSU) processome, first precursor of the small eukaryotic ribosomal subunit. During the assembly of the SSU processome in the nucleolus, many ribosome biogenesis factors, an RNA chaperone and ribosomal proteins associate with the nascent pre-rRNA and work in concert to generate RNA folding, modifications, rearrangements and cleavage as well as targeted degradation of pre-ribosomal RNA by the RNA exosome. Involved in neuronal-lineage cell proliferation. This chain is HEAT repeat-containing protein 1, found in Homo sapiens (Human).